We begin with the raw amino-acid sequence, 183 residues long: Ion-translocating oxidoreductase complex subunit B (183 aa).

The segment at 1-23 is hydrophobic; that stretch reads MLSALLVMAAIAVVLGAALGFAA. Residues 29 to 88 form the 4Fe-4S domain; that stretch reads EGDPLVDKIDAILPQTQCGQCGYPGCKPYAQAIAQGEADINQCPPGGEEGVRKLADLLGR. [4Fe-4S] cluster-binding residues include cysteine 46, cysteine 49, cysteine 54, cysteine 71, cysteine 113, cysteine 116, cysteine 119, cysteine 123, cysteine 143, cysteine 146, cysteine 149, and cysteine 153. 4Fe-4S ferredoxin-type domains follow at residues 104–133 and 135–163; these read AVAY…GAAK and MHTV…MEPV.

This sequence belongs to the 4Fe4S bacterial-type ferredoxin family. RnfB subfamily. As to quaternary structure, the complex is composed of six subunits: RnfA, RnfB, RnfC, RnfD, RnfE and RnfG. Requires [4Fe-4S] cluster as cofactor.

It localises to the cell inner membrane. Its function is as follows. Part of a membrane-bound complex that couples electron transfer with translocation of ions across the membrane. The sequence is that of Ion-translocating oxidoreductase complex subunit B from Azoarcus sp. (strain BH72).